Here is a 338-residue protein sequence, read N- to C-terminus: Glycerol-3-phosphate dehydrogenase [NAD(P)+] (338 aa).

NADPH-binding residues include Ser-12, Trp-13, and Lys-110. Sn-glycerol 3-phosphate is bound by residues Lys-110, Gly-141, and Ser-143. NADPH is bound at residue Ala-145. The sn-glycerol 3-phosphate site is built by Lys-196, Asp-249, Ser-259, Arg-260, and Asn-261. The active-site Proton acceptor is Lys-196. Residue Arg-260 participates in NADPH binding. Positions 284 and 286 each coordinate NADPH.

This sequence belongs to the NAD-dependent glycerol-3-phosphate dehydrogenase family.

The protein localises to the cytoplasm. It catalyses the reaction sn-glycerol 3-phosphate + NAD(+) = dihydroxyacetone phosphate + NADH + H(+). It carries out the reaction sn-glycerol 3-phosphate + NADP(+) = dihydroxyacetone phosphate + NADPH + H(+). The protein operates within membrane lipid metabolism; glycerophospholipid metabolism. Functionally, catalyzes the reduction of the glycolytic intermediate dihydroxyacetone phosphate (DHAP) to sn-glycerol 3-phosphate (G3P), the key precursor for phospholipid synthesis. The protein is Glycerol-3-phosphate dehydrogenase [NAD(P)+] of Lactiplantibacillus plantarum (strain ATCC BAA-793 / NCIMB 8826 / WCFS1) (Lactobacillus plantarum).